Reading from the N-terminus, the 234-residue chain is Orotidine 5'-phosphate decarboxylase (234 aa).

Substrate-binding positions include Asp-10, Lys-32, 59-68 (DLKFHDIPNT), Thr-119, Arg-180, Gln-189, Gly-209, and Arg-210. Lys-61 functions as the Proton donor in the catalytic mechanism.

The protein belongs to the OMP decarboxylase family. Type 1 subfamily. In terms of assembly, homodimer.

The enzyme catalyses orotidine 5'-phosphate + H(+) = UMP + CO2. Its pathway is pyrimidine metabolism; UMP biosynthesis via de novo pathway; UMP from orotate: step 2/2. In terms of biological role, catalyzes the decarboxylation of orotidine 5'-monophosphate (OMP) to uridine 5'-monophosphate (UMP). The protein is Orotidine 5'-phosphate decarboxylase of Mannheimia succiniciproducens (strain KCTC 0769BP / MBEL55E).